The primary structure comprises 864 residues: Dynamin-1 (864 aa).

In terms of domain architecture, Dynamin-type G spans 28–294 (DLDLPQIAVV…LTNHIRDTLP (267 aa)). The G1 motif stretch occupies residues 38–45 (GGQSAGKS). The GDP site is built by Ser41, Gly43, Lys44, Ser45, Ser46, Arg59, and Gly60. The interval 64-66 (VTR) is G2 motif. A Phosphotyrosine modification is found at Tyr80. Position 125 is a 3'-nitrotyrosine; alternate (Tyr125). A Phosphotyrosine; alternate modification is found at Tyr125. The G3 motif stretch occupies residues 136-139 (DLPG). The segment at 205 to 208 (TKLD) is G4 motif. Lys206, Asp208, Asp211, Asn236, Arg237, and Gln239 together coordinate GDP. The tract at residues 235 to 238 (VNRS) is G5 motif. A phosphoserine mark is found at Ser306 and Ser347. A Phosphotyrosine modification is found at Tyr354. Ser512 carries the post-translational modification Phosphoserine. Residues 519–625 (LVIRKGWLTI…WKASFLRAGV (107 aa)) enclose the PH domain. The GED domain occupies 659–750 (VETIRNLVDS…IIGDINTTTV (92 aa)). A disordered region spans residues 767-864 (SVPAGRRSPT…PESPRPPFDL (98 aa)). At Ser774 the chain carries Phosphoserine; by CDK5. The residue at position 778 (Ser778) is a Phosphoserine. Omega-N-methylarginine is present on Arg796. Ser822 carries the phosphoserine modification. Over residues 825–843 (PFGPPPQVPSRPNRAPPGV) the composition is skewed to pro residues. Ser851 and Ser857 each carry phosphoserine.

The protein belongs to the TRAFAC class dynamin-like GTPase superfamily. Dynamin/Fzo/YdjA family. In terms of assembly, homodimer; homodimerization is mediated by the dynamin-type G domain which promotes assembly-stimulated GTPase activity. Homo-tetramer formed from two dimers in the absence of lipid. Oligomerizes into a helical polymer that self-assembles around the vesicle membrane, when associated to the menbrane through lipid binding. Interacts (via C-terminal proline-rich domain (PRD)) with SNX9 (via SH3 domain); this interaction allows regulation of DNM1 self-assembly during late stages of endocytic vesicle formation and supports DNM1's early functions in accelerating clathrin-coated pits (CCPs) maturation in non neuronals cell. Interacts (via C-terminal proline-rich domain (PRD)) with MYO1E (via SH3 domain); this interaction regulates receptor-mediated endocytosis. Interacts with SNX33 (via SH3 domain); this interaction decreases DNM1-dependent endocytosis. Interacts with DIAPH1. Interacts with GRB2 (via SH3 domain); this interaction mediates disassembly of DNM1 polymers, therefore modulates self-assembly. Forms a complex with BIN1 (via SH3 domain) and SH3GL2 (via SH3 domain). Forms a complex with SH3GL2 (via SH3 domain) and AMPH (via SH3 domain). Forms a complex with SH3GL2 (via SH3 domain) and SYNJ1. Interacts with AMPH. Interacts (via C-terminal proline-rich domain (PRD)) with SYT1; this interaction facilitates vesicle fission during clathrin-mediated endocytosis (CME). Interacts (via C-terminal proline-rich domain (PRD)) with PLCG1 (via SH3 domain); this interaction stimulates the release of GDP from DNM1 and enhances DNM1-dependent endocytosis. Interacts with SNPH; this interaction inhibits the binding of DNM1 to AMPH and DNM1-receptor-mediated endocytosis. Interacts with CAV1. Interacts with SH3GLB1 (via SH3 domain). Interacts with PACSIN1 (via SH3 domain), PACSIN2 (via SH3 domain) and PACSIN3 (via SH3 domain). Interacts with UNC119; this interaction decreases DNM1's GTPase activity and affects DNM1's interaction with AMPH. Interacts (GTP-bound form) with DNAJC6; this interaction allows clathrin-coated vesicle (CCV) formation at the plasma membrane. Post-translationally, phosphorylation at Ser-774 by GSK3B/GSK3-beta leads to inactivation of receptor-mediated endocytosis in non-neuronal cells. Dephosphorylation at Ser-774, through the EGFR downstream signaling, leads to activation and regulates early stages of clathrin-mediated endocytosis (CME). Phosphorylated by CDK5 leading to synaptic vesicle endocytosis (SVE) activation. In terms of tissue distribution, brain-specific (peripheral sensory neurons).

It localises to the cytoplasmic vesicle. The protein localises to the clathrin-coated vesicle. Its subcellular location is the golgi apparatus. It is found in the cell membrane. The protein resides in the membrane. It localises to the clathrin-coated pit. The protein localises to the presynapse. Its subcellular location is the secretory vesicle. It is found in the chromaffin granule. The catalysed reaction is GTP + H2O = GDP + phosphate + H(+). Its function is as follows. Catalyzes the hydrolysis of GTP and utilizes this energy to mediate vesicle scission and participates in many forms of endocytosis, such as clathrin-mediated endocytosis or synaptic vesicle endocytosis as well as rapid endocytosis (RE). Associates to the membrane, through lipid binding, and self-assembles into rings and stacks of interconnected rings through oligomerization to form a helical polymer around the vesicle membrane leading to constriction of invaginated coated pits around their necks. Self-assembly of the helical polymer induces membrane tubules narrowing until the polymer reaches a length sufficient to trigger GTP hydrolysis. Depending on the curvature imposed on the tubules, membrane detachment from the helical polymer upon GTP hydrolysis can cause spontaneous hemifission followed by complete fission. May play a role in regulating early stages of clathrin-mediated endocytosis in non-neuronal cells through its activation by dephosphorylation via the signaling downstream of EGFR. Controls vesicle size at a step before fission, during formation of membrane pits, at hippocampal synapses. Controls plastic adaptation of the synaptic vesicle recycling machinery to high levels of activity. Mediates rapid endocytosis (RE), a Ca(2+)-dependent and clathrin- and K(+)-independent process in chromaffin cells. Microtubule-associated force-producing protein involved in producing microtubule bundles and able to bind and hydrolyze GTP. Through its interaction with DNAJC6, acts during the early steps of clathrin-coated vesicle (CCV) formation. This is Dynamin-1 (Dnm1) from Rattus norvegicus (Rat).